Consider the following 344-residue polypeptide: Lipase chaperone (344 aa).

The chain crosses the membrane as a helical span at residues 14–34 (AMVYGVVGLAAIAGVAMWSGA).

This sequence belongs to the lipase chaperone family.

The protein resides in the cell inner membrane. May be involved in the folding of the extracellular lipase during its passage through the periplasm. The sequence is that of Lipase chaperone from Burkholderia lata (strain ATCC 17760 / DSM 23089 / LMG 22485 / NCIMB 9086 / R18194 / 383).